The chain runs to 800 residues: Ent-copalyl diphosphate synthase 2 (800 aa).

The tract at residues 52–80 (QGQETRERRQLDDDEHARPPQGGDDDVAA) is disordered. Residues 55 to 69 (ETRERRQLDDDEHAR) show a composition bias toward basic and acidic residues. Lysine 242 contributes to the substrate binding site. Residues aspartate 374 and aspartate 376 each contribute to the Mg(2+) site. The short motif at 374 to 377 (DIDD) is the DXDD motif element. Lysine 461 serves as a coordination point for substrate.

The protein belongs to the terpene synthase family. Requires Mg(2+) as cofactor.

It catalyses the reaction (2E,6E,10E)-geranylgeranyl diphosphate = ent-copalyl diphosphate. In terms of biological role, catalyzes the conversion of geranylgeranyl diphosphate to the phytoalexin precursor ent-copalyl diphosphate. The chain is Ent-copalyl diphosphate synthase 2 (CPS2) from Oryza sativa subsp. indica (Rice).